The sequence spans 159 residues: Transcription elongation factor GreA (159 aa).

A coiled-coil region spans residues 14–76 (IKKLENELEY…QLENMLKNAS (63 aa)).

The protein belongs to the GreA/GreB family.

Necessary for efficient RNA polymerase transcription elongation past template-encoded arresting sites. The arresting sites in DNA have the property of trapping a certain fraction of elongating RNA polymerases that pass through, resulting in locked ternary complexes. Cleavage of the nascent transcript by cleavage factors such as GreA or GreB allows the resumption of elongation from the new 3'terminus. GreA releases sequences of 2 to 3 nucleotides. The chain is Transcription elongation factor GreA from Clostridium kluyveri (strain NBRC 12016).